A 278-amino-acid chain; its full sequence is MFSALGKWVRGSRNDKDFVTKYTADLSQITSQIHQLDVALKKSQSILSQWQSNLTFYGIALTVLALSYTYWEYHGYRPYLVVTALLCIGSLILFKWALTKLYAFYNNNRLRKLAKLRAIHQKKLEKLKEETHYNATSSIIQRFSSGEDQNDDAMVLLDDELNAKYQELNNLKTELEKFKKESHVKGLKKEDSDAWFDKIISVLAGGNELDSTSSLSPFKKIICPQCHWKSNCYRLASKPIIFICPHCNHKIDEVKEREDAIEAKQPAQPSQSEKEKTK.

Topologically, residues 1-45 (MFSALGKWVRGSRNDKDFVTKYTADLSQITSQIHQLDVALKKSQS) are cytoplasmic. The helical transmembrane segment at 46 to 66 (ILSQWQSNLTFYGIALTVLAL) threads the bilayer. The Lumenal segment spans residues 67–77 (SYTYWEYHGYR). A helical membrane pass occupies residues 78–98 (PYLVVTALLCIGSLILFKWAL). Residues 99–278 (TKLYAFYNNN…PSQSEKEKTK (180 aa)) are Cytoplasmic-facing. A coiled-coil region spans residues 107 to 183 (NNRLRKLAKL…ELEKFKKESH (77 aa)). Residues 223–247 (CPQCHWKSNCYRLASKPIIFICPHC) form a C4-type; plays a role in ER morphology zinc finger. The tract at residues 258–278 (EDAIEAKQPAQPSQSEKEKTK) is disordered.

The protein belongs to the lunapark family. In terms of assembly, interacts with RTN1; this interaction is negatively regulated by SEY1. Interacts with SEY1 and YOP1.

Its subcellular location is the endoplasmic reticulum membrane. Functionally, plays a role in tubular endoplasmic reticulum network formation and maintenance. Works in conjunction with the ER shaping proteins (reticulons RTN1 and RTN2, YOP1), and in antagonism to SEY1 to maintain the network in a dynamic equilibrium. May counterbalance SEY1-directed polygon formation by promoting polygon loss through ring closure. In Saccharomyces cerevisiae (strain ATCC 204508 / S288c) (Baker's yeast), this protein is Endoplasmic reticulum junction formation protein lunapark (LNP1).